Reading from the N-terminus, the 587-residue chain is Bifunctional dihydrofolate reductase-thymidylate synthase (587 aa).

The region spanning 9–237 (DIYAICACCK…TTLDFIIYSK (229 aa)) is the DHFR domain. NADP(+) is bound at residue 36 to 42 (GIGNAGV). Asp51 contributes to the substrate binding site. NADP(+)-binding positions include 108–110 (KKS) and 129–132 (LSRT). The substrate site is built by Ile173, Tyr179, and Thr194. 174-181 (GGSSVYKE) provides a ligand contact to NADP(+). Positions 301–587 (NHPEYQYLNI…HDKINMDMAA (287 aa)) are thymidylate synthase. DUMP is bound at residue Arg324. The active site involves Cys469. DUMP-binding positions include His470, 488–492 (QRSCD), Asn500, and 530–532 (HVY).

This sequence in the N-terminal section; belongs to the dihydrofolate reductase family. It in the C-terminal section; belongs to the thymidylate synthase family. As to quaternary structure, homodimer.

It catalyses the reaction (6S)-5,6,7,8-tetrahydrofolate + NADP(+) = 7,8-dihydrofolate + NADPH + H(+). The catalysed reaction is dUMP + (6R)-5,10-methylene-5,6,7,8-tetrahydrofolate = 7,8-dihydrofolate + dTMP. Its pathway is cofactor biosynthesis; tetrahydrofolate biosynthesis; 5,6,7,8-tetrahydrofolate from 7,8-dihydrofolate: step 1/1. In terms of biological role, bifunctional enzyme. Involved in de novo dTMP biosynthesis. Key enzyme in folate metabolism. Catalyzes an essential reaction for de novo glycine and purine synthesis, DNA precursor synthesis, and for the conversion of dUMP to dTMP. In Plasmodium berghei (strain Anka), this protein is Bifunctional dihydrofolate reductase-thymidylate synthase.